The sequence spans 374 residues: GDSL esterase/lipase At1g71250 (374 aa).

A signal peptide spans 1-28 (MNTNRKKMKVHIGGYVLILALTVSVILQ). Catalysis depends on serine 48, which acts as the Nucleophile. Asparagine 162 carries N-linked (GlcNAc...) asparagine glycosylation. Residues aspartate 338 and histidine 341 contribute to the active site.

It belongs to the 'GDSL' lipolytic enzyme family.

Its subcellular location is the secreted. The polypeptide is GDSL esterase/lipase At1g71250 (Arabidopsis thaliana (Mouse-ear cress)).